A 251-amino-acid chain; its full sequence is MRILLSNDDGVHAPGLQCLAAALRTVAEVHVVAPDRDRSGASNSLTLARPLRAMRLDNGDVRVDGTPTDCVHLAITGLMEEEPDMVISGINSGANMGDDVLYSGTVAAAMEGRFLGLPAIAVSINSHEGKHYDSAARAVLDLLKRLGHMPLPANTILNVNVPHLPWSEIQGVQATRLGHRHKSEPMIRSHDPRGRPIYWVGAAGPEQDAGPGTDFHAVRSGYVSVTPIQVDLTRYDAIDTVANWLRDEDPA.

A divalent metal cation contacts are provided by Asp8, Asp9, Ser39, and Asn91.

It belongs to the SurE nucleotidase family. It depends on a divalent metal cation as a cofactor.

Its subcellular location is the cytoplasm. It carries out the reaction a ribonucleoside 5'-phosphate + H2O = a ribonucleoside + phosphate. In terms of biological role, nucleotidase that shows phosphatase activity on nucleoside 5'-monophosphates. This chain is 5'-nucleotidase SurE, found in Thioalkalivibrio sulfidiphilus (strain HL-EbGR7).